The sequence spans 875 residues: MIGCGACEPEVKMAGGQAAAALPTWKMAARRSLSARGRGVLQAAAGRLLPLLLLSCCCSAGGCTAAGENEETVIIGLRLEDTNDVSFMEGGALRVSERTRVKLRVYGQNINNETWSRIAFTEHERRRHTPGERGLGGPAPPEPDSGPQRCGIRTSDIIILPHIILNRRTSGIIEIEIKPLRKMEKSKSYYLCTSLSTPALGAGGSGSASGTVGGKGGAGVAGLPPPPWAETTWIYHDGEDTKMIVGEEKKFLLPFWLQVIFISLLLCLSGMFSGLNLGLMALDPMELRIVQNCGTEKEKNYAKRIEPVRRQGNYLLCSLLLGNVLVNTTLTILLDDIAGSGLVAVVVSTIGIVIFGEIVPQAICSRHGLAVGANTIFLTKFFMMMTFPASYPVSKLLDCVLGQEIGTVYNREKLLEMLRVTDPYNDLVKEELNIIQGALELRTKTVEDVMTPLRDCFMITGEAILDFNTMSEIMESGYTRIPVFEGERSNIVDLLFVKDLAFVDPDDCTPLKTITKFYNHPLHFVFNDTKLDAMLEEFKKGKSHLAIVQRVNNEGEGDPFYEVLGIVTLEDVIEEIIKSEILDETDLYTDNRTKKKVAHRERKQDFSAFKQTDSETKVKISPQLLLAMHRFLATEVEAFSPSQMSEKILLRLLKHPNVIQELKYDEKNKKAPECYLYQRNKPVDYFVLILQGKVEVEAGKEGMKFEASAFSYYGVMALTASPVPLSLSRTFVVSRTEVLAAGSPGENKSPPRPCGLNHSDSLSRSDRIDAMTPTLGSSNNQLSSSFLQVYIPDYSVRALSDLQFVKISRQQYQNALMASRMDKTPQSSDSENTKIELTLTEMHDGLPDETANLLNEQNCVSHNKANHSLHSEGAI.

Residues 1 to 250 (MIGCGACEPE…TKMIVGEEKK (250 aa)) are Extracellular-facing. A glycan (N-linked (GlcNAc...) asparagine) is linked at N112. The tract at residues 122-148 (EHERRRHTPGERGLGGPAPPEPDSGPQ) is disordered. A helical membrane pass occupies residues 251-271 (FLLPFWLQVIFISLLLCLSGM). The 181-residue stretch at 251-431 (FLLPFWLQVI…DPYNDLVKEE (181 aa)) folds into the CNNM transmembrane domain. Residues 272–313 (FSGLNLGLMALDPMELRIVQNCGTEKEKNYAKRIEPVRRQGN) are Cytoplasmic-facing. An intramembrane region (helical) is located at residues 314–334 (YLLCSLLLGNVLVNTTLTILL). Residues 335–338 (DDIA) are Cytoplasmic-facing. Residues 339–359 (GSGLVAVVVSTIGIVIFGEIV) traverse the membrane as a helical segment. Topologically, residues 360-368 (PQAICSRHG) are extracellular. The chain crosses the membrane as a helical span at residues 369 to 389 (LAVGANTIFLTKFFMMMTFPA). At 390–875 (SYPVSKLLDC…NHSLHSEGAI (486 aa)) the chain is on the cytoplasmic side. CBS domains are found at residues 450–511 (MTPL…CTPL) and 518–584 (YNHP…ILDE). Residues 741–763 (AGSPGENKSPPRPCGLNHSDSLS) form a disordered region. A Phosphoserine modification is found at S761.

This sequence belongs to the ACDP family.

Its subcellular location is the cell membrane. Functionally, divalent metal cation transporter. Mediates transport of divalent metal cations in an order of Mg(2+) &gt; Co(2+) &gt; Mn(2+) &gt; Sr(2+) &gt; Ba(2+) &gt; Cu(2+) &gt; Fe(2+). The chain is Metal transporter CNNM2 (Cnnm2) from Rattus norvegicus (Rat).